The primary structure comprises 114 residues: uncharacterized protein (114 aa).

3 helical membrane passes run 21 to 41 (LASS…VCLF), 65 to 85 (GCFS…SALI), and 93 to 113 (LSVF…ILTD).

It localises to the membrane. This is an uncharacterized protein from Saccharomyces cerevisiae (strain ATCC 204508 / S288c) (Baker's yeast).